A 547-amino-acid polypeptide reads, in one-letter code: uncharacterized protein (547 aa).

It to B.pertussis prn N-terminal region.

This is an uncharacterized protein from Escherichia coli O157:H7.